The chain runs to 238 residues: DNA repair protein RecO (238 aa).

It belongs to the RecO family.

Its function is as follows. Involved in DNA repair and RecF pathway recombination. The polypeptide is DNA repair protein RecO (Aliivibrio fischeri (strain ATCC 700601 / ES114) (Vibrio fischeri)).